Here is a 490-residue protein sequence, read N- to C-terminus: Betaine aldehyde dehydrogenase (490 aa).

Asparagine 93 contacts K(+). 150 to 152 (GAW) is a binding site for NAD(+). Lysine 162 (charge relay system) is an active-site residue. NAD(+) is bound at residue 176–179 (KPSE). Valine 180 is a binding site for K(+). Position 230–233 (230–233 (GTAT)) interacts with NAD(+). Leucine 246 is a binding site for K(+). Glutamate 252 (proton acceptor) is an active-site residue. Residues glycine 254, cysteine 286, and glutamate 387 each contribute to the NAD(+) site. Cysteine 286 (nucleophile) is an active-site residue. Cysteine 286 is subject to Cysteine sulfenic acid (-SOH). 2 residues coordinate K(+): lysine 457 and glycine 460. Residue glutamate 464 is the Charge relay system of the active site.

It belongs to the aldehyde dehydrogenase family. Dimer of dimers. The cofactor is K(+).

It catalyses the reaction betaine aldehyde + NAD(+) + H2O = glycine betaine + NADH + 2 H(+). The protein operates within amine and polyamine biosynthesis; betaine biosynthesis via choline pathway; betaine from betaine aldehyde: step 1/1. Its function is as follows. Involved in the biosynthesis of the osmoprotectant glycine betaine. Catalyzes the irreversible oxidation of betaine aldehyde to the corresponding acid. The sequence is that of Betaine aldehyde dehydrogenase from Xanthomonas campestris pv. campestris (strain ATCC 33913 / DSM 3586 / NCPPB 528 / LMG 568 / P 25).